Consider the following 779-residue polypeptide: Transcription factor SPT20 homolog (779 aa).

Ser-296 is modified (phosphoserine). Disordered regions lie at residues 373 to 392 (DEES…DHSN) and 420 to 507 (PVKM…IPRK). Low complexity predominate over residues 424–437 (SHSSSGSASLSQVS). The segment covering 445–454 (TETVSVQSSV) has biased composition (polar residues). Over residues 470–479 (SSSGNSSSGN) the composition is skewed to low complexity. The residue at position 494 (Thr-494) is a Phosphothreonine. 2 positions are modified to phosphoserine: Ser-519 and Ser-524. Disordered regions lie at residues 641–677 (QLSQ…EQAL) and 755–779 (LHHH…TPKF). The span at 755-771 (LHHHRHTGSQSKSKMKR) shows a compositional bias: basic residues.

It belongs to the SPT20 family. As to quaternary structure, interacts with MAPK14. Interacts with ATG9A. Highly expressed in testis, moderately in brain and pituitary gland. Expressed in several fetal tissues, including lung, brain, thymus and kidney. Expression is down-regulated in malignant prostate tissues.

The protein localises to the nucleus. Required for MAP kinase p38 (MAPK11, MAPK12, MAPK13 and/or MAPK14) activation during gastrulation. Required for down-regulation of E-cadherin during gastrulation by regulating E-cadherin protein level downstream from NCK-interacting kinase (NIK) and independently of the regulation of transcription by FGF signaling and Snail. Required for starvation-induced ATG9A trafficking during autophagy. The sequence is that of Transcription factor SPT20 homolog (SUPT20H) from Homo sapiens (Human).